The following is a 112-amino-acid chain: UPF0235 protein RHE_CH03912 (112 aa).

It belongs to the UPF0235 family.

The protein is UPF0235 protein RHE_CH03912 of Rhizobium etli (strain ATCC 51251 / DSM 11541 / JCM 21823 / NBRC 15573 / CFN 42).